Here is a 103-residue protein sequence, read N- to C-terminus: uncharacterized protein (103 aa).

It localises to the mitochondrion. This is an uncharacterized protein from Claviceps purpurea (Ergot fungus).